A 347-amino-acid polypeptide reads, in one-letter code: 3-isopropylmalate dehydrogenase (347 aa).

Substrate-binding residues include arginine 94, arginine 104, arginine 128, and aspartate 219. Aspartate 219, aspartate 243, and aspartate 247 together coordinate Mg(2+). 279–291 (GSAPDIAGQGKAD) provides a ligand contact to NAD(+).

The protein belongs to the isocitrate and isopropylmalate dehydrogenases family. LeuB type 2 subfamily. As to quaternary structure, homodimer. Mg(2+) is required as a cofactor. It depends on Mn(2+) as a cofactor.

It is found in the cytoplasm. The enzyme catalyses (2R,3S)-3-isopropylmalate + NAD(+) = 4-methyl-2-oxopentanoate + CO2 + NADH. It functions in the pathway amino-acid biosynthesis; L-leucine biosynthesis; L-leucine from 3-methyl-2-oxobutanoate: step 3/4. Functionally, catalyzes the oxidation of 3-carboxy-2-hydroxy-4-methylpentanoate (3-isopropylmalate) to 3-carboxy-4-methyl-2-oxopentanoate. The product decarboxylates to 4-methyl-2 oxopentanoate. The protein is 3-isopropylmalate dehydrogenase of Streptomyces coelicolor (strain ATCC BAA-471 / A3(2) / M145).